Reading from the N-terminus, the 622-residue chain is Palmitoyltransferase pfa3 (622 aa).

The Cytoplasmic portion of the chain corresponds to M1–C38. The chain crosses the membrane as a helical span at residues T39–V59. Over D60–S76 the chain is Vacuolar. The chain crosses the membrane as a helical span at residues Y77 to F97. The Cytoplasmic portion of the chain corresponds to T98–K175. The region spanning R132–I182 is the DHHC domain. Residues A176–A196 traverse the membrane as a helical segment. Topologically, residues S197–N217 are vacuolar. Residues Y218 to W238 traverse the membrane as a helical segment. At H239–D622 the chain is on the cytoplasmic side. Disordered stretches follow at residues P298–A334, R419–D507, and D533–D622. A compositionally biased stretch (basic and acidic residues) spans R302–R311. Over residues T313–P330 the composition is skewed to polar residues. The segment covering R419 to Q428 has biased composition (basic and acidic residues). Polar residues predominate over residues Y443 to P455. Over residues P466–R488 the composition is skewed to low complexity. Positions D533–F547 are enriched in acidic residues. Basic and acidic residues predominate over residues N610 to D622.

It belongs to the DHHC palmitoyltransferase family. PFA3 subfamily. Autopalmitoylated.

The protein resides in the vacuole membrane. The catalysed reaction is L-cysteinyl-[protein] + hexadecanoyl-CoA = S-hexadecanoyl-L-cysteinyl-[protein] + CoA. Functionally, palmitoyltransferase specific for vac8. Palmitoylates vac8 at one or more of its N-terminal cysteine residues, which is required for its proper membrane localization. The polypeptide is Palmitoyltransferase pfa3 (ptr-3) (Neurospora crassa (strain ATCC 24698 / 74-OR23-1A / CBS 708.71 / DSM 1257 / FGSC 987)).